Consider the following 614-residue polypeptide: Putative binding protein BMEII0691 (614 aa).

Positions 1 to 28 (MNRFIAFFRSVFLIGLVATAFGALPARA) are cleaved as a signal peptide.

It belongs to the bacterial solute-binding protein 5 family.

Its subcellular location is the periplasm. The protein is Putative binding protein BMEII0691 of Brucella melitensis biotype 1 (strain ATCC 23456 / CCUG 17765 / NCTC 10094 / 16M).